We begin with the raw amino-acid sequence, 200 residues long: 3-isopropylmalate dehydratase small subunit (200 aa).

The protein belongs to the LeuD family. LeuD type 1 subfamily. In terms of assembly, heterodimer of LeuC and LeuD.

It catalyses the reaction (2R,3S)-3-isopropylmalate = (2S)-2-isopropylmalate. Its pathway is amino-acid biosynthesis; L-leucine biosynthesis; L-leucine from 3-methyl-2-oxobutanoate: step 2/4. In terms of biological role, catalyzes the isomerization between 2-isopropylmalate and 3-isopropylmalate, via the formation of 2-isopropylmaleate. The polypeptide is 3-isopropylmalate dehydratase small subunit (Vibrio cholerae serotype O1 (strain ATCC 39541 / Classical Ogawa 395 / O395)).